Reading from the N-terminus, the 154-residue chain is AP-1 complex subunit sigma-3 (154 aa).

Belongs to the adaptor complexes small subunit family. As to quaternary structure, adaptor protein complex 1 (AP-1) is a heterotetramer composed of two large adaptins (gamma-type subunit AP1G1 and beta-type subunit AP1B1), a medium adaptin (mu-type subunit AP1M1 or AP1M2) and a small adaptin (sigma-type subunit AP1S1 or AP1S2 or AP1S3).

The protein resides in the golgi apparatus. Its subcellular location is the cytoplasmic vesicle membrane. The protein localises to the membrane. It localises to the clathrin-coated pit. Subunit of clathrin-associated adaptor protein complex 1 that plays a role in protein sorting in the late-Golgi/trans-Golgi network (TGN) and/or endosomes. The AP complexes mediate both the recruitment of clathrin to membranes and the recognition of sorting signals within the cytosolic tails of transmembrane cargo molecules. Involved in TLR3 trafficking. The chain is AP-1 complex subunit sigma-3 (Ap1s3) from Mus musculus (Mouse).